The sequence spans 356 residues: MKIKVLIVDDSALIRGVMREIINSQPDMEVVGVAPDPIAARELIKQTNPDVLTLDVEMPKMDGLEFLEKLMRLRPMPVVMVSSLTERGSEITMRALELGAVDFVTKPKMSIQSGMLEYTDLIADKIRIAARARIKPRTPHAQGGQSGTTLAAVRNPLTSSEKLIIIGASTGGTEAIKDFLMQLPPDSPGVLITQHMPEGFTRSFANRLDKLCKISVKEAEGGERVLPGHAYLAPGHSHLLLVRSGANYMTKLDQGPPVNRHRPSVDVLFNSAALTAGKNAVGVILTGMGKDGAAGMLEMKKAGGYNLAQDEASCVVFGMPKEAIAVGATHEVAPLHELPRRVLEFFAAHGERAMRV.

Residues 4–121 form the Response regulatory domain; it reads KVLIVDDSAL…QSGMLEYTDL (118 aa). Aspartate 55 is subject to 4-aspartylphosphate. Positions 156 to 349 constitute a CheB-type methylesterase domain; sequence PLTSSEKLII…RRVLEFFAAH (194 aa). Residues serine 169, histidine 195, and aspartate 291 contribute to the active site.

It belongs to the CheB family. In terms of processing, phosphorylated by CheA. Phosphorylation of the N-terminal regulatory domain activates the methylesterase activity.

Its subcellular location is the cytoplasm. The catalysed reaction is [protein]-L-glutamate 5-O-methyl ester + H2O = L-glutamyl-[protein] + methanol + H(+). It catalyses the reaction L-glutaminyl-[protein] + H2O = L-glutamyl-[protein] + NH4(+). Involved in chemotaxis. Part of a chemotaxis signal transduction system that modulates chemotaxis in response to various stimuli. Catalyzes the demethylation of specific methylglutamate residues introduced into the chemoreceptors (methyl-accepting chemotaxis proteins or MCP) by CheR. Also mediates the irreversible deamidation of specific glutamine residues to glutamic acid. The protein is Protein-glutamate methylesterase/protein-glutamine glutaminase of Thiobacillus denitrificans (strain ATCC 25259 / T1).